Here is a 616-residue protein sequence, read N- to C-terminus: Dihydroxy-acid dehydratase (616 aa).

Aspartate 81 is a Mg(2+) binding site. Cysteine 122 contacts [2Fe-2S] cluster. Positions 123 and 124 each coordinate Mg(2+). Lysine 124 carries the N6-carboxylysine modification. Cysteine 195 serves as a coordination point for [2Fe-2S] cluster. Glutamate 491 contributes to the Mg(2+) binding site. Catalysis depends on serine 517, which acts as the Proton acceptor.

Belongs to the IlvD/Edd family. As to quaternary structure, homodimer. Requires [2Fe-2S] cluster as cofactor. Mg(2+) serves as cofactor.

The enzyme catalyses (2R)-2,3-dihydroxy-3-methylbutanoate = 3-methyl-2-oxobutanoate + H2O. It carries out the reaction (2R,3R)-2,3-dihydroxy-3-methylpentanoate = (S)-3-methyl-2-oxopentanoate + H2O. It participates in amino-acid biosynthesis; L-isoleucine biosynthesis; L-isoleucine from 2-oxobutanoate: step 3/4. Its pathway is amino-acid biosynthesis; L-valine biosynthesis; L-valine from pyruvate: step 3/4. In terms of biological role, functions in the biosynthesis of branched-chain amino acids. Catalyzes the dehydration of (2R,3R)-2,3-dihydroxy-3-methylpentanoate (2,3-dihydroxy-3-methylvalerate) into 2-oxo-3-methylpentanoate (2-oxo-3-methylvalerate) and of (2R)-2,3-dihydroxy-3-methylbutanoate (2,3-dihydroxyisovalerate) into 2-oxo-3-methylbutanoate (2-oxoisovalerate), the penultimate precursor to L-isoleucine and L-valine, respectively. The polypeptide is Dihydroxy-acid dehydratase (Salmonella heidelberg (strain SL476)).